A 372-amino-acid chain; its full sequence is 3-dehydroquinate synthase (372 aa).

NAD(+) contacts are provided by residues 116–120 (GVVGD), 140–141 (TT), Lys-153, Lys-162, and 180–183 (TLKT). Positions 195, 260, and 277 each coordinate Zn(2+).

It belongs to the sugar phosphate cyclases superfamily. Dehydroquinate synthase family. It depends on NAD(+) as a cofactor. Requires Co(2+) as cofactor. Zn(2+) is required as a cofactor.

The protein localises to the cytoplasm. The catalysed reaction is 7-phospho-2-dehydro-3-deoxy-D-arabino-heptonate = 3-dehydroquinate + phosphate. The protein operates within metabolic intermediate biosynthesis; chorismate biosynthesis; chorismate from D-erythrose 4-phosphate and phosphoenolpyruvate: step 2/7. Functionally, catalyzes the conversion of 3-deoxy-D-arabino-heptulosonate 7-phosphate (DAHP) to dehydroquinate (DHQ). In Prochlorococcus marinus (strain MIT 9313), this protein is 3-dehydroquinate synthase.